The primary structure comprises 490 residues: 53 kDa membrane antigen A (490 aa).

The N-terminal stretch at 1–16 (MKKKLFFALLVLILSS) is a signal peptide. Cys-17 is lipidated: N-palmitoyl cysteine. Cys-17 carries the S-diacylglycerol cysteine lipid modification.

It is found in the cell membrane. The chain is 53 kDa membrane antigen A (tdpA) from Treponema denticola.